The following is a 264-amino-acid chain: uncharacterized protein (264 aa).

Residues 182 to 198 form a helical membrane-spanning segment; sequence TVTGVSNALGFIIAALL.

It to E.coli YjiC.

Its subcellular location is the membrane. This is an uncharacterized protein from Escherichia coli (strain K12).